Reading from the N-terminus, the 424-residue chain is Deoxyguanosinetriphosphate triphosphohydrolase-like protein (424 aa).

Positions M1–T24 are disordered. Residues D8–K18 are compositionally biased toward basic and acidic residues. The 151-residue stretch at R67–S217 folds into the HD domain.

This sequence belongs to the dGTPase family. Type 2 subfamily.

This is Deoxyguanosinetriphosphate triphosphohydrolase-like protein from Corynebacterium glutamicum (strain R).